The primary structure comprises 388 residues: uncharacterized protein (388 aa).

The protein localises to the mitochondrion. This is an uncharacterized protein from Dictyostelium citrinum (Slime mold).